A 161-amino-acid polypeptide reads, in one-letter code: Phosphopantetheine adenylyltransferase (161 aa).

Ser8 is a substrate binding site. ATP is bound by residues 8–9 (SF) and His16. Substrate-binding positions include 36–40 (ENPRK), Leu72, and Arg86. Residues 87-89 (GLR), Glu97, and 122-128 (FSFISSS) each bind ATP. Residue Glu132 participates in substrate binding.

This sequence belongs to the bacterial CoaD family. As to quaternary structure, homohexamer. Requires Mg(2+) as cofactor.

It is found in the cytoplasm. It catalyses the reaction (R)-4'-phosphopantetheine + ATP + H(+) = 3'-dephospho-CoA + diphosphate. The protein operates within cofactor biosynthesis; coenzyme A biosynthesis; CoA from (R)-pantothenate: step 4/5. Functionally, reversibly transfers an adenylyl group from ATP to 4'-phosphopantetheine, yielding dephospho-CoA (dPCoA) and pyrophosphate. The chain is Phosphopantetheine adenylyltransferase from Thermotoga maritima (strain ATCC 43589 / DSM 3109 / JCM 10099 / NBRC 100826 / MSB8).